We begin with the raw amino-acid sequence, 277 residues long: Nickel transport system permease protein NikC (277 aa).

The Cytoplasmic segment spans residues 1-12 (MNFFLSSRWSVR). Residues 13-33 (LALIIIALLALIALTSQWWLP) form a helical membrane-spanning segment. The Periplasmic segment spans residues 34-78 (YDPQAIDLPSRLLSPDAQHWLGTDHLGRDIFSRLMAATRVSLGSV). Positions 67–260 (LMAATRVSLG…ISVMAFNLVG (194 aa)) constitute an ABC transmembrane type-1 domain. The helical transmembrane segment at 79–99 (MACLLLVLTLGLVIGGSAGLI) threads the bilayer. Residues 100 to 120 (GGRVDQATMRVADMFMTFPTS) lie on the Cytoplasmic side of the membrane. Residues 121-141 (ILSFFMVGVLGTGLTNVIIAI) traverse the membrane as a helical segment. Over 142 to 183 (ALSHWAWYARMVRSLVISLRQREFVLASRLSGAGHVRVFVDH) the chain is Periplasmic. Residues 184 to 204 (LAGAVIPSLLVLATLDIGHMM) traverse the membrane as a helical segment. The Cytoplasmic segment spans residues 205–207 (LHV). The helical transmembrane segment at 208–228 (AGMSFLGLGVTAPTAEWGVMI) threads the bilayer. Topologically, residues 229–239 (NDARQYIWTQP) are periplasmic. A helical membrane pass occupies residues 240-260 (LQMFWPGLALFISVMAFNLVG). Over 261-277 (DALRDHLDPHLVTEHAH) the chain is Cytoplasmic.

This sequence belongs to the binding-protein-dependent transport system permease family. OppBC subfamily. Probably forms a heterodimeric pore with NikB.

The protein localises to the cell inner membrane. Involved in a nickel transport system, probably translocates nickel through the bacterial inner membrane. The protein is Nickel transport system permease protein NikC (nikC) of Escherichia coli O157:H7.